We begin with the raw amino-acid sequence, 810 residues long: Oligoxyloglucan-reducing end-specific xyloglucanase (810 aa).

The signal sequence occupies residues 1-28 (MRAKNGPGSWLALTAIATSLNTLALAAA). An N-linked (GlcNAc...) asparagine glycan is attached at asparagine 32. Catalysis depends on aspartate 66, which acts as the Nucleophile. The BNR 1 repeat unit spans residues 126-135 (FVSQDRGATF). Asparagine 188 carries N-linked (GlcNAc...) asparagine glycosylation. One copy of the BNR 2 repeat lies at 226–236 (YVTRDSGESWE). N-linked (GlcNAc...) asparagine glycans are attached at residues asparagine 298, asparagine 312, and asparagine 321. A BNR 3 repeat occupies 359–369 (YLSHDGGKSWK). Asparagine 455 carries an N-linked (GlcNAc...) asparagine glycan. The active-site Proton donor is the aspartate 498. Asparagine 544 carries N-linked (GlcNAc...) asparagine glycosylation. The stretch at 554–564 (YSADGGSSWTK) is one BNR 4 repeat. Asparagine 573 and asparagine 612 each carry an N-linked (GlcNAc...) asparagine glycan. Residues 617 to 626 (YVTTDLGQTW) form a BNR 5 repeat. Asparagine 638 carries an N-linked (GlcNAc...) asparagine glycan. 3 BNR repeats span residues 658 to 667 (YLSRDGGLSY), 705 to 716 (YHTRNFGKKWTK), and 759 to 769 (YRSDDNGKTWV).

The protein belongs to the glycosyl hydrolase 74 family.

It is found in the secreted. It catalyses the reaction Hydrolysis of cellobiose from the reducing end of xyloglucans consisting of a beta-(1-&gt;4)-linked glucan carrying alpha-D-xylosyl groups on O-6 of the glucose residues. To be a substrate, the first residue must be unsubstituted, the second residue may bear a xylosyl group, whether further glycosylated or not, and the third residue, which becomes the new terminus by the action of the enzyme, is preferably xylosylated, but this xylose residue must not be further substituted.. Functionally, oligoxyloglucan-reducing end-specific xyloglucanase involved in degradation of xyloglucans. Releases the first two glycosyl segments from oligoxyloglucans. Active against cotton xyloglucan, tamarind xyloglucan and tamarind xyloglucan oligomers. In Emericella nidulans (strain FGSC A4 / ATCC 38163 / CBS 112.46 / NRRL 194 / M139) (Aspergillus nidulans), this protein is Oligoxyloglucan-reducing end-specific xyloglucanase (xgcA).